The primary structure comprises 443 residues: ATP-dependent protease ATPase subunit HslU (443 aa).

Residues isoleucine 18, 60-65 (GVGKTE), aspartate 256, glutamate 321, and arginine 393 each bind ATP.

It belongs to the ClpX chaperone family. HslU subfamily. In terms of assembly, a double ring-shaped homohexamer of HslV is capped on each side by a ring-shaped HslU homohexamer. The assembly of the HslU/HslV complex is dependent on binding of ATP.

The protein localises to the cytoplasm. In terms of biological role, ATPase subunit of a proteasome-like degradation complex; this subunit has chaperone activity. The binding of ATP and its subsequent hydrolysis by HslU are essential for unfolding of protein substrates subsequently hydrolyzed by HslV. HslU recognizes the N-terminal part of its protein substrates and unfolds these before they are guided to HslV for hydrolysis. This chain is ATP-dependent protease ATPase subunit HslU, found in Escherichia coli O139:H28 (strain E24377A / ETEC).